Consider the following 374-residue polypeptide: MMTDNSKTRVVVGMSGGVDSSVTALLLKEQGYDVIGVFMKNWDDTDEFGVCTATEDYKDVAAVADQIGIPYYSVNFEKEYWDRVFEYFLAEYRSGRTPNPDVMCNKEIKFKAFLDYAMTLGADYVATGHYAQIKRDENGVVHMLRGLDKGKDQTYFLSQLSQEQLQKTMFPLGHLQKSEVRAIAEQAGLATAKKKDSTGICFISEKNFKTFLSHYLPAQKGRMMTVDGRDMGEHAGLMYYTIGQRGGLGIGGQQGGDNKPWFVVGKDLSQNILYVGQGFYHESLMSTSLDASVIQFTREVPEEFTLECTAKFRYRQPDSKVTVHVKKDKAKVVFAEPQRAITPGQAVVFYDGHECLGGGIIDMAYKDGEPCQYI.

ATP-binding positions include 13 to 20 and Met-39; that span reads GMSGGVDS. The interaction with target base in tRNA stretch occupies residues 99 to 101; the sequence is NPD. The active-site Nucleophile is Cys-104. A disulfide bond links Cys-104 and Cys-201. Gly-128 lines the ATP pocket. The interaction with tRNA stretch occupies residues 151–153; sequence KDQ. Cys-201 acts as the Cysteine persulfide intermediate in catalysis. The segment at 313 to 314 is interaction with tRNA; it reads RY.

The protein belongs to the MnmA/TRMU family.

The protein localises to the cytoplasm. The catalysed reaction is S-sulfanyl-L-cysteinyl-[protein] + uridine(34) in tRNA + AH2 + ATP = 2-thiouridine(34) in tRNA + L-cysteinyl-[protein] + A + AMP + diphosphate + H(+). Functionally, catalyzes the 2-thiolation of uridine at the wobble position (U34) of tRNA, leading to the formation of s(2)U34. This is tRNA-specific 2-thiouridylase MnmA from Streptococcus equi subsp. equi (strain 4047).